The primary structure comprises 1603 residues: Pentafunctional AROM polypeptide (1603 aa).

The segment at 1 to 384 is 3-dehydroquinate synthase; the sequence is MGVPTKISIL…YEPRASTVSN (384 aa). NAD(+) is bound by residues 44–46, 81–84, 114–116, and D119; these read DTN, ESSK, and GGV. R130 lines the 7-phospho-2-dehydro-3-deoxy-D-arabino-heptonate pocket. 139–140 lines the NAD(+) pocket; sequence TT. 7-phospho-2-dehydro-3-deoxy-D-arabino-heptonate contacts are provided by D146 and K152. An NAD(+)-binding site is contributed by K161. N162 lines the 7-phospho-2-dehydro-3-deoxy-D-arabino-heptonate pocket. Residues 179-182 and N190 contribute to the NAD(+) site; that span reads FLNT. Zn(2+) is bound at residue E194. Residues 194-197 and K250 contribute to the 7-phospho-2-dehydro-3-deoxy-D-arabino-heptonate site; that span reads EVIK. E260 acts as the Proton acceptor; for 3-dehydroquinate synthase activity in catalysis. Residues 264–268 and H271 each bind 7-phospho-2-dehydro-3-deoxy-D-arabino-heptonate; that span reads RNLLN. Position 271 (H271) interacts with Zn(2+). Residue H275 is the Proton acceptor; for 3-dehydroquinate synthase activity of the active site. 7-phospho-2-dehydro-3-deoxy-D-arabino-heptonate contacts are provided by H287 and K356. H287 contributes to the Zn(2+) binding site. Residues 397–842 form an EPSP synthase region; that stretch reads VYPGFPKSLN…WNTLAQTFKV (446 aa). C824 serves as the catalytic For EPSP synthase activity. The shikimate kinase stretch occupies residues 872–1064; that stretch reads AASIFIIGMR…RRKENTFFVS (193 aa). Residue 879 to 886 participates in ATP binding; it reads GMRGAGKT. The 3-dehydroquinase stretch occupies residues 1065–1285; it reads LTFPDLTPAS…AAPGQLSARE (221 aa). H1188 serves as the catalytic Proton acceptor; for 3-dehydroquinate dehydratase activity. K1216 (schiff-base intermediate with substrate; for 3-dehydroquinate dehydratase activity) is an active-site residue. Residues 1298-1603 are shikimate dehydrogenase; sequence AKKFAVIGKP…GVSSSDDTIS (306 aa).

It in the N-terminal section; belongs to the sugar phosphate cyclases superfamily. Dehydroquinate synthase family. The protein in the 2nd section; belongs to the EPSP synthase family. This sequence in the 3rd section; belongs to the shikimate kinase family. In the 4th section; belongs to the type-I 3-dehydroquinase family. It in the C-terminal section; belongs to the shikimate dehydrogenase family. In terms of assembly, homodimer. Zn(2+) serves as cofactor.

Its subcellular location is the cytoplasm. The enzyme catalyses 7-phospho-2-dehydro-3-deoxy-D-arabino-heptonate = 3-dehydroquinate + phosphate. It carries out the reaction 3-dehydroquinate = 3-dehydroshikimate + H2O. It catalyses the reaction shikimate + NADP(+) = 3-dehydroshikimate + NADPH + H(+). The catalysed reaction is shikimate + ATP = 3-phosphoshikimate + ADP + H(+). The enzyme catalyses 3-phosphoshikimate + phosphoenolpyruvate = 5-O-(1-carboxyvinyl)-3-phosphoshikimate + phosphate. The protein operates within metabolic intermediate biosynthesis; chorismate biosynthesis; chorismate from D-erythrose 4-phosphate and phosphoenolpyruvate: step 2/7. It functions in the pathway metabolic intermediate biosynthesis; chorismate biosynthesis; chorismate from D-erythrose 4-phosphate and phosphoenolpyruvate: step 3/7. Its pathway is metabolic intermediate biosynthesis; chorismate biosynthesis; chorismate from D-erythrose 4-phosphate and phosphoenolpyruvate: step 4/7. It participates in metabolic intermediate biosynthesis; chorismate biosynthesis; chorismate from D-erythrose 4-phosphate and phosphoenolpyruvate: step 5/7. The protein operates within metabolic intermediate biosynthesis; chorismate biosynthesis; chorismate from D-erythrose 4-phosphate and phosphoenolpyruvate: step 6/7. In terms of biological role, the AROM polypeptide catalyzes 5 consecutive enzymatic reactions in prechorismate polyaromatic amino acid biosynthesis. The polypeptide is Pentafunctional AROM polypeptide (Paracoccidioides brasiliensis (strain Pb03)).